We begin with the raw amino-acid sequence, 161 residues long: Nucleotide-binding protein Bcenmc03_2579 (161 aa).

The protein belongs to the YajQ family.

Nucleotide-binding protein. In Burkholderia orbicola (strain MC0-3), this protein is Nucleotide-binding protein Bcenmc03_2579.